The chain runs to 204 residues: MKLFFDLFPIILFFAAYQLYDQLPPDIVAGLDRIPFLVLIPGAPENAILFATAIAILASVLQVGLYFFKHHRFESMHLVTLGLVVVLGGATLMFRDPTFIKWKPTVVNWLFGLAFLASQLFTRKPLVQRMMSTAITLPTSIWNRLNGAWIIFFLVSGLANLYVAYAFTEAVWVNFKLFGMLGLTLLFVVGQAFYLTRYLNPSED.

5 helical membrane passes run 48–68 (ILFA…LYFF), 73–93 (FESM…ATLM), 102–122 (WKPT…QLFT), 147–167 (GAWI…AYAF), and 170–190 (AVWV…FVVG).

It belongs to the YciB family.

The protein localises to the cell inner membrane. Functionally, plays a role in cell envelope biogenesis, maintenance of cell envelope integrity and membrane homeostasis. The chain is Inner membrane-spanning protein YciB from Nitrosococcus oceani (strain ATCC 19707 / BCRC 17464 / JCM 30415 / NCIMB 11848 / C-107).